Here is a 914-residue protein sequence, read N- to C-terminus: Probable dipeptidyl-aminopeptidase B (914 aa).

The tract at residues 1-82 (MGAEKRINDE…GLPPPSGAQR (82 aa)) is disordered. Over 1 to 88 (MGAEKRINDE…GAQRTPKKVS (88 aa)) the chain is Cytoplasmic. Residues 26-38 (DSTSTASISLALI) show a composition bias toward low complexity. The helical; Signal-anchor for type II membrane protein transmembrane segment at 89-109 (IIFWLVAALCVGGWLVAFFVF) threads the bilayer. At 110–914 (MGSPKKDSDK…RSLLKRMSNA (805 aa)) the chain is on the vacuolar side. N-linked (GlcNAc...) asparagine glycosylation is found at Asn128, Asn295, Asn347, and Asn617. Residue Ser751 is the Charge relay system of the active site. Asn810 carries N-linked (GlcNAc...) asparagine glycosylation. Active-site charge relay system residues include Asp828 and His861. N-linked (GlcNAc...) asparagine glycosylation is present at Asn897.

It belongs to the peptidase S9B family.

It localises to the vacuole membrane. It catalyses the reaction Release of an N-terminal dipeptide, Xaa-Yaa-|-Zaa-, from a polypeptide, preferentially when Yaa is Pro, provided Zaa is neither Pro nor hydroxyproline.. In terms of biological role, type IV dipeptidyl-peptidase which removes N-terminal dipeptides sequentially from polypeptides having unsubstituted N-termini provided that the penultimate residue is proline. The polypeptide is Probable dipeptidyl-aminopeptidase B (DAPB) (Uncinocarpus reesii (strain UAMH 1704)).